An 834-amino-acid polypeptide reads, in one-letter code: Protein Jade-1 (834 aa).

The interval 1 to 46 is disordered; it reads MKRGRLPSSSEDSDDNGSLSTTWSQHSRSQHGRSSTCSRPEDRKPS. A compositionally biased stretch (low complexity) spans 24 to 35; sequence SQHSRSQHGRSS. An interaction with KAT7/HBO1 and histones region spans residues 61 to 81; it reads DSYQLNPDDYYVLADPWRQEW. The interval 81–189 is interaction with histones; sequence WEKGVQVPVS…EQRCYDNMNH (109 aa). Phosphoserine is present on Ser-90. Residue Thr-93 is modified to Phosphothreonine. Residue Lys-115 forms a Glycyl lysine isopeptide (Lys-Gly) (interchain with G-Cter in SUMO2) linkage. The PHD-type 1 zinc-finger motif lies at 204 to 254; it reads DVVCDVCQSPDGEDGNEMVFCDKCNICVHQACYGILKVPEGSWLCRTCALG. A C2HC pre-PHD-type zinc finger spans residues 256-290; sequence QPKCLLCPKKGGAMKPTRSGTKWVHVSCALWIPEV. A PHD-type 2 zinc finger spans residues 314–370; that stretch reads LVCSLCNEKFGASIQCSVKNCRTAFHVTCAFDRGLEMKTILAENDEVKFKSYCPKHS. A disordered region spans residues 367–409; that stretch reads PKHSSHRKPEEGLGEGAAQENGAPESSPQSPLEPYGSLEPNRE. A Glycyl lysine isopeptide (Lys-Gly) (interchain with G-Cter in SUMO2) cross-link involves residue Lys-573. Disordered stretches follow at residues 589–621 and 676–716; these read HPLK…CGRR and DKSF…GTRK. The residue at position 603 (Ser-603) is a Phosphoserine. At Lys-609 the chain carries N6-acetyllysine. A phosphoserine mark is found at Ser-704 and Ser-735. A disordered region spans residues 738-819; it reads KSWGGFRIPK…EKKCIHASST (82 aa). Basic and acidic residues-rich tracts occupy residues 747 to 768 and 777 to 790; these read KKGE…HSDC and PAKE…RADS.

The protein belongs to the JADE family. Component of the HBO1 complex composed at least of ING4 or ING5, KAT7/HBO1, MEAF6, and one of JADE1, JADE2 and JADE3. Interacts with NPHP4. Highly expressed in kidney. Also present in liver (at protein level).

The protein resides in the nucleus. Its subcellular location is the chromosome. It localises to the cytoplasm. It is found in the cytoskeleton. The protein localises to the cilium basal body. Its function is as follows. Scaffold subunit of some HBO1 complexes, which have a histone H4 acetyltransferase activity. Plays a key role in HBO1 complex by directing KAT7/HBO1 specificity towards histone H4 acetylation (H4K5ac, H4K8ac and H4K12ac), regulating DNA replication initiation, regulating DNA replication initiation. May also promote acetylation of nucleosomal histone H4 by KAT5. Promotes apoptosis. May act as a renal tumor suppressor. Negatively regulates canonical Wnt signaling; at least in part, cooperates with NPHP4 in this function. This is Protein Jade-1 (Jade1) from Mus musculus (Mouse).